Here is a 303-residue protein sequence, read N- to C-terminus: Sulfate adenylyltransferase subunit 2 (303 aa).

This sequence belongs to the PAPS reductase family. CysD subfamily. As to quaternary structure, heterodimer composed of CysD, the smaller subunit, and CysN.

The catalysed reaction is sulfate + ATP + H(+) = adenosine 5'-phosphosulfate + diphosphate. Its pathway is sulfur metabolism; hydrogen sulfide biosynthesis; sulfite from sulfate: step 1/3. With CysN forms the ATP sulfurylase (ATPS) that catalyzes the adenylation of sulfate producing adenosine 5'-phosphosulfate (APS) and diphosphate, the first enzymatic step in sulfur assimilation pathway. APS synthesis involves the formation of a high-energy phosphoric-sulfuric acid anhydride bond driven by GTP hydrolysis by CysN coupled to ATP hydrolysis by CysD. The polypeptide is Sulfate adenylyltransferase subunit 2 (Phocaeicola vulgatus (strain ATCC 8482 / DSM 1447 / JCM 5826 / CCUG 4940 / NBRC 14291 / NCTC 11154) (Bacteroides vulgatus)).